Consider the following 377-residue polypeptide: Nitric oxide reductase FlRd-NAD(+) reductase (377 aa).

The protein belongs to the FAD-dependent oxidoreductase family. FAD is required as a cofactor.

It is found in the cytoplasm. It carries out the reaction 2 reduced [nitric oxide reductase rubredoxin domain] + NAD(+) + H(+) = 2 oxidized [nitric oxide reductase rubredoxin domain] + NADH. It participates in nitrogen metabolism; nitric oxide reduction. Functionally, one of at least two accessory proteins for anaerobic nitric oxide (NO) reductase. Reduces the rubredoxin moiety of NO reductase. The sequence is that of Nitric oxide reductase FlRd-NAD(+) reductase from Escherichia coli O81 (strain ED1a).